The following is a 412-amino-acid chain: Branched-chain alpha-ketoacid dehydrogenase kinase (412 aa).

The transit peptide at 1 to 30 (MILTSVLGSGPRSGSSLWPLLGSSLSLRVR) directs the protein to the mitochondrion. Residue Ser31 is modified to Phosphoserine. One can recognise a Histidine kinase domain in the interval 159-404 (LDDHKDVVTL…DVYLRLRHID (246 aa)). An N6-acetyllysine mark is found at Lys192 and Lys233. Residues Asn279 and Asp315 each coordinate ATP. A Mg(2+)-binding site is contributed by Asn279. Val328, Asp330, and Phe333 together coordinate K(+). ATP contacts are provided by Thr334 and Thr335. Residues Ser356 and Ser360 each carry the phosphoserine modification. The ATP site is built by His364, Gly367, and Leu370. Gly367 contacts K(+).

This sequence belongs to the PDK/BCKDK protein kinase family. In terms of assembly, homodimer. Homotetramer. Dimerizes through interaction of two opposing nucleotide-binding domains. Interacts with E2 component of the branched-chain alpha-ketoacid dehydrogenase (BCKDH) complex. Competes with BCKDK for binding to the E2 component; this interaction is modulated by branched-chain alpha-keto acids. At steady state, BCKDH holoenzyme contains BCKDK and BCKDHA is phosphorylated. In response to high levels of branched-chain alpha-keto acids, the inhibitory BCKDK is replaced by activating PPM1K leading to BCKDHA dephosphorylation and BCAA degradation. Post-translationally, autophosphorylated. As to expression, expressed in heart and liver.

It is found in the mitochondrion matrix. It localises to the mitochondrion. The catalysed reaction is L-seryl-[3-methyl-2-oxobutanoate dehydrogenase] + ATP = O-phospho-L-seryl-[3-methyl-2-oxobutanoate dehydrogenase] + ADP + H(+). The enzyme catalyses L-seryl-[protein] + ATP = O-phospho-L-seryl-[protein] + ADP + H(+). Its activity is regulated as follows. The ATP-ase activity is up-regulated by potassium and rubidium ions but not by sodium ions. Up-regulated in the presence of apo- or lipoylated-DBT/E2b subunit of the BCKDH complex. Serine/threonine-protein kinase component of macronutrients metabolism. Forms a functional kinase and phosphatase pair with PPM1K, serving as a metabolic regulatory node that coordinates branched-chain amino acids (BCAAs) with glucose and lipid metabolism via two distinct phosphoprotein targets: mitochondrial BCKDHA subunit of the branched-chain alpha-ketoacid dehydrogenase (BCKDH) complex and cytosolic ACLY, a lipogenic enzyme of Krebs cycle. Phosphorylates and inactivates mitochondrial BCKDH complex a multisubunit complex consisting of three multimeric components each involved in different steps of BCAA catabolism: E1 composed of BCKDHA and BCKDHB, E2 core composed of DBT monomers, and E3 composed of DLD monomers. Associates with the E2 component of BCKDH complex and phosphorylates BCKDHA on Ser-333, leading to conformational changes that interrupt substrate channeling between E1 and E2 and inactivates the BCKDH complex. phosphorylates ACLY on Ser-455 in response to changes in cellular carbohydrate abundance such as occurs during fasting to feeding metabolic transition. Refeeding stimulates MLXIPL/ChREBP transcription factor, leading to increased BCKDK to PPM1K expression ratio, phosphorylation and activation of ACLY that ultimately results in the generation of malonyl-CoA and oxaloacetate immediate substrates of de novo lipogenesis and glucogenesis, respectively. Recognizes phosphosites having SxxE/D canonical motif. This is Branched-chain alpha-ketoacid dehydrogenase kinase (Bckdk) from Rattus norvegicus (Rat).